We begin with the raw amino-acid sequence, 231 residues long: MNKAVVVFSGGQDSTTCLVKALNEFDEVHAITFDYGQRHRLEIEVAQNLAKELGVAAHKVMDVTLLNELAISSLTRDDIPVSHELQENGLPNSFVPGRNILFLTLAGIYAYQIGAQTIITGVCETDFSGYPDCRDDFVKAMNSALVKGMDKPLVIQTPLMWLNKTETWALADQNNALQLVREKTLTCYNGIIGDGCGDCPSCHLRKVGLNDYLDNREAIMASLVEKQHAES.

8-18 (FSGGQDSTTCL) contacts ATP. Positions 187, 196, 199, and 202 each coordinate Zn(2+).

It belongs to the QueC family. Zn(2+) is required as a cofactor.

It carries out the reaction 7-carboxy-7-deazaguanine + NH4(+) + ATP = 7-cyano-7-deazaguanine + ADP + phosphate + H2O + H(+). Its pathway is purine metabolism; 7-cyano-7-deazaguanine biosynthesis. In terms of biological role, catalyzes the ATP-dependent conversion of 7-carboxy-7-deazaguanine (CDG) to 7-cyano-7-deazaguanine (preQ(0)). The protein is 7-cyano-7-deazaguanine synthase of Vibrio vulnificus (strain CMCP6).